Reading from the N-terminus, the 72-residue chain is Variant surface glycoprotein MITAT 1.1000BC (72 aa).

The GPI-anchor amidated aspartate moiety is linked to residue Asp50. A propeptide spans Gly51–Phe72 (removed in mature form).

The protein localises to the cell membrane. VSG forms a coat on the surface of the parasite. The trypanosome evades the immune response of the host by expressing a series of antigenically distinct VSGs from an estimated 1000 VSG genes. The chain is Variant surface glycoprotein MITAT 1.1000BC from Trypanosoma brucei brucei.